Reading from the N-terminus, the 425-residue chain is Glutamate-1-semialdehyde 2,1-aminomutase (425 aa).

Residue Lys-264 is modified to N6-(pyridoxal phosphate)lysine.

The protein belongs to the class-III pyridoxal-phosphate-dependent aminotransferase family. HemL subfamily. As to quaternary structure, homodimer. It depends on pyridoxal 5'-phosphate as a cofactor.

The protein resides in the cytoplasm. It carries out the reaction (S)-4-amino-5-oxopentanoate = 5-aminolevulinate. It functions in the pathway porphyrin-containing compound metabolism; protoporphyrin-IX biosynthesis; 5-aminolevulinate from L-glutamyl-tRNA(Glu): step 2/2. This is Glutamate-1-semialdehyde 2,1-aminomutase from Hydrogenobaculum sp. (strain Y04AAS1).